A 443-amino-acid chain; its full sequence is Carbohydrate sulfotransferase 9 (443 aa).

Over methionine 1–glutamine 12 the chain is Cytoplasmic. The chain crosses the membrane as a helical; Signal-anchor for type II membrane protein span at residues valine 13–valine 33. Residues tryptophan 34–leucine 443 are Lumenal-facing. Positions leucine 108–proline 128 are enriched in polar residues. The segment at leucine 108–leucine 132 is disordered. The N-linked (GlcNAc...) asparagine glycan is linked to asparagine 159. Proline 220–asparagine 226 contacts 3'-phosphoadenylyl sulfate. An N-linked (GlcNAc...) asparagine glycan is attached at asparagine 243. Residue arginine 280–serine 288 coordinates 3'-phosphoadenylyl sulfate. N-linked (GlcNAc...) asparagine glycosylation is found at asparagine 324 and asparagine 437.

This sequence belongs to the sulfotransferase 2 family. In terms of tissue distribution, highly expressed in trachea. Also expressed in fetal lung, adult pancreas, testis and salivary gland. Expressed at low level in pituitary gland, apex of the heart, adult lung, prostate and mammary gland. Weakly or not expressed in heart, liver and spinal cord.

The protein localises to the golgi apparatus membrane. Its subcellular location is the secreted. Its function is as follows. Catalyzes the transfer of sulfate to position 4 of non-reducing N-acetylgalactosamine (GalNAc) residues in both N-glycans and O-glycans. Participates in biosynthesis of glycoprotein hormones lutropin and thyrotropin, by mediating sulfation of their carbohydrate structures. Has a higher activity toward carbonic anhydrase VI than toward lutropin. Only active against terminal GalNAcbeta1,GalNAcbeta. Isoform 2, but not isoform 1, is active toward chondroitin. In Homo sapiens (Human), this protein is Carbohydrate sulfotransferase 9 (CHST9).